Here is a 92-residue protein sequence, read N- to C-terminus: UPF0250 protein Rmag_0541 (92 aa).

Belongs to the UPF0250 family.

This Ruthia magnifica subsp. Calyptogena magnifica protein is UPF0250 protein Rmag_0541.